A 434-amino-acid polypeptide reads, in one-letter code: Serine hydroxymethyltransferase (434 aa).

(6S)-5,6,7,8-tetrahydrofolate contacts are provided by residues L131 and 135 to 137; that span reads GHL. Residue K240 is modified to N6-(pyridoxal phosphate)lysine.

This sequence belongs to the SHMT family. In terms of assembly, homodimer. It depends on pyridoxal 5'-phosphate as a cofactor.

The protein resides in the cytoplasm. The enzyme catalyses (6R)-5,10-methylene-5,6,7,8-tetrahydrofolate + glycine + H2O = (6S)-5,6,7,8-tetrahydrofolate + L-serine. The protein operates within one-carbon metabolism; tetrahydrofolate interconversion. It functions in the pathway amino-acid biosynthesis; glycine biosynthesis; glycine from L-serine: step 1/1. In terms of biological role, catalyzes the reversible interconversion of serine and glycine with tetrahydrofolate (THF) serving as the one-carbon carrier. This reaction serves as the major source of one-carbon groups required for the biosynthesis of purines, thymidylate, methionine, and other important biomolecules. Also exhibits THF-independent aldolase activity toward beta-hydroxyamino acids, producing glycine and aldehydes, via a retro-aldol mechanism. The sequence is that of Serine hydroxymethyltransferase from Gluconobacter oxydans (strain 621H) (Gluconobacter suboxydans).